The chain runs to 471 residues: Ribulose bisphosphate carboxylase large chain (471 aa).

2 residues coordinate substrate: Asn-119 and Thr-169. Lys-171 acts as the Proton acceptor in catalysis. Lys-173 provides a ligand contact to substrate. Residues Lys-197, Asp-199, and Glu-200 each coordinate Mg(2+). At Lys-197 the chain carries N6-carboxylysine. His-290 serves as the catalytic Proton acceptor. The substrate site is built by Arg-291, His-323, and Ser-375.

This sequence belongs to the RuBisCO large chain family. Type I subfamily. In terms of assembly, heterohexadecamer of 8 large chains and 8 small chains; disulfide-linked. The disulfide link is formed within the large subunit homodimers. Mg(2+) serves as cofactor. Post-translationally, the disulfide bond which can form in the large chain dimeric partners within the hexadecamer appears to be associated with oxidative stress and protein turnover.

Its subcellular location is the carboxysome. It catalyses the reaction 2 (2R)-3-phosphoglycerate + 2 H(+) = D-ribulose 1,5-bisphosphate + CO2 + H2O. The enzyme catalyses D-ribulose 1,5-bisphosphate + O2 = 2-phosphoglycolate + (2R)-3-phosphoglycerate + 2 H(+). Functionally, ruBisCO catalyzes two reactions: the carboxylation of D-ribulose 1,5-bisphosphate, the primary event in carbon dioxide fixation, as well as the oxidative fragmentation of the pentose substrate in the photorespiration process. Both reactions occur simultaneously and in competition at the same active site. The polypeptide is Ribulose bisphosphate carboxylase large chain (Microcystis aeruginosa (strain NIES-843 / IAM M-2473)).